The following is a 122-amino-acid chain: Large ribosomal subunit protein uL18 (122 aa).

Belongs to the universal ribosomal protein uL18 family. In terms of assembly, part of the 50S ribosomal subunit; part of the 5S rRNA/L5/L18/L25 subcomplex. Contacts the 5S and 23S rRNAs.

This is one of the proteins that bind and probably mediate the attachment of the 5S RNA into the large ribosomal subunit, where it forms part of the central protuberance. The sequence is that of Large ribosomal subunit protein uL18 from Buchnera aphidicola subsp. Acyrthosiphon pisum (strain 5A).